The primary structure comprises 1770 residues: Transposon Ty2-LR1 Gag-Pol polyprotein (1770 aa).

Polar residues-rich tracts occupy residues 1 to 11, 19 to 39, and 49 to 60; these read MESQQLHQNPH, ASVTSKEVPSNQDPLAVSASN, and KVNSQQETTPGT. 2 disordered regions span residues 1–86 and 359–453; these read MESQ…GQYQ and QHSE…LPDH. The interval 295–397 is RNA-binding; sequence ENNINVSDRL…SSKPRAAKAH (103 aa). The segment covering 369–381 has biased composition (low complexity); it reads TSPNTTNTKVTTR. Composition is skewed to polar residues over residues 399–408 and 415–435; these read IATSSKFSRV and ESTVSSQYLSDDNELSLGQQQ. Residue D457 is the For protease activity; shared with dimeric partner of the active site. Residues 579–636 form an integrase-type zinc finger-like region; it reads NVNKSKSVNKYPYPLIHRMLGHANFRSIQKSLKKNAVTYLKESDIEWSNASTYQCPDC. Residues 656–831 enclose the Integrase catalytic domain; it reads ESYEPFQYLH…AGLDITTILP (176 aa). Mg(2+) is bound by residues D667 and D732. Disordered regions lie at residues 1005–1038, 1058–1135, 1146–1165, and 1170–1205; these read GGTIESDTTSPRHSSTFTARNQKRPGSPNDMIDL, GTEE…KSSK, LPLPDLTHKSPTDTSDVSKD, and HSRQTNSSLGGMDDSNVLTTTKSKKRSLEDNETEIE. Composition is skewed to polar residues over residues 1009–1024 and 1065–1082; these read ESDTTSPRHSSTFTAR and QRNSDTNIKYRTTNSTPS. Residues 1151-1165 show a composition bias toward basic and acidic residues; that stretch reads LTHKSPTDTSDVSKD. Positions 1193-1227 match the Bipartite nuclear localization signal motif; sequence KKRSLEDNETEIEVSRDTWNNKNMRSLEPPRSKKR. The Reverse transcriptase Ty1/copia-type domain maps to 1353-1491; that stretch reads NDYYITQLDI…DILGLEIKYQ (139 aa). Residues D1361, D1442, D1443, D1625, E1667, and D1700 each coordinate Mg(2+). The RNase H Ty1/copia-type domain maps to 1625–1767; sequence DASYGNQPYY…IKTFKLLTNK (143 aa).

In terms of assembly, the capsid protein forms a homotrimer, from which the VLPs are assembled. The protease is a homodimer, whose active site consists of two apposed aspartic acid residues. Post-translationally, initially, virus-like particles (VLPs) are composed of the structural unprocessed proteins Gag and Gag-Pol, and also contain the host initiator methionine tRNA (tRNA(i)-Met) which serves as a primer for minus-strand DNA synthesis, and a dimer of genomic Ty RNA. Processing of the polyproteins occurs within the particle and proceeds by an ordered pathway, called maturation. First, the protease (PR) is released by autocatalytic cleavage of the Gag-Pol polyprotein, and this cleavage is a prerequisite for subsequent processing at the remaining sites to release the mature structural and catalytic proteins. Maturation takes place prior to the RT reaction and is required to produce transposition-competent VLPs.

The protein localises to the cytoplasm. It localises to the nucleus. The enzyme catalyses DNA(n) + a 2'-deoxyribonucleoside 5'-triphosphate = DNA(n+1) + diphosphate. The catalysed reaction is Endonucleolytic cleavage to 5'-phosphomonoester.. Capsid protein (CA) is the structural component of the virus-like particle (VLP), forming the shell that encapsulates the retrotransposons dimeric RNA genome. The particles are assembled from trimer-clustered units and there are holes in the capsid shells that allow for the diffusion of macromolecules. CA also has nucleocapsid-like chaperone activity, promoting primer tRNA(i)-Met annealing to the multipartite primer-binding site (PBS), dimerization of Ty2 RNA and initiation of reverse transcription. Its function is as follows. The aspartyl protease (PR) mediates the proteolytic cleavages of the Gag and Gag-Pol polyproteins after assembly of the VLP. Functionally, reverse transcriptase/ribonuclease H (RT) is a multifunctional enzyme that catalyzes the conversion of the retro-elements RNA genome into dsDNA within the VLP. The enzyme displays a DNA polymerase activity that can copy either DNA or RNA templates, and a ribonuclease H (RNase H) activity that cleaves the RNA strand of RNA-DNA heteroduplexes during plus-strand synthesis and hydrolyzes RNA primers. The conversion leads to a linear dsDNA copy of the retrotransposon that includes long terminal repeats (LTRs) at both ends. In terms of biological role, integrase (IN) targets the VLP to the nucleus, where a subparticle preintegration complex (PIC) containing at least integrase and the newly synthesized dsDNA copy of the retrotransposon must transit the nuclear membrane. Once in the nucleus, integrase performs the integration of the dsDNA into the host genome. The polypeptide is Transposon Ty2-LR1 Gag-Pol polyprotein (TY2B-LR1) (Saccharomyces cerevisiae (strain ATCC 204508 / S288c) (Baker's yeast)).